The sequence spans 135 residues: uncharacterized protein (135 aa).

This is an uncharacterized protein from Rickettsia prowazekii (strain Madrid E).